Consider the following 283-residue polypeptide: 5'-nucleotidase SurE (283 aa).

A divalent metal cation is bound by residues aspartate 14, aspartate 15, serine 47, and asparagine 105.

This sequence belongs to the SurE nucleotidase family. It depends on a divalent metal cation as a cofactor.

The protein resides in the cytoplasm. It catalyses the reaction a ribonucleoside 5'-phosphate + H2O = a ribonucleoside + phosphate. Its function is as follows. Nucleotidase that shows phosphatase activity on nucleoside 5'-monophosphates. This chain is 5'-nucleotidase SurE, found in Chlamydia muridarum (strain MoPn / Nigg).